We begin with the raw amino-acid sequence, 258 residues long: Isoprenyl transferase 2 (258 aa).

D35 is an active-site residue. D35 contributes to the Mg(2+) binding site. Substrate contacts are provided by residues 36–39, W40, R50, and 81–83; these read GNRR and SDD. N84 serves as the catalytic Proton acceptor. Substrate contacts are provided by residues R87, R207, and 213–215; that span reads RLS. E226 lines the Mg(2+) pocket.

Belongs to the UPP synthase family. Homodimer. Requires Mg(2+) as cofactor.

Its function is as follows. Catalyzes the condensation of isopentenyl diphosphate (IPP) with allylic pyrophosphates generating different type of terpenoids. This chain is Isoprenyl transferase 2, found in Streptomyces coelicolor (strain ATCC BAA-471 / A3(2) / M145).